Reading from the N-terminus, the 179-residue chain is Large ribosomal subunit protein uL6 (179 aa).

It belongs to the universal ribosomal protein uL6 family. In terms of assembly, part of the 50S ribosomal subunit.

Functionally, this protein binds to the 23S rRNA, and is important in its secondary structure. It is located near the subunit interface in the base of the L7/L12 stalk, and near the tRNA binding site of the peptidyltransferase center. This chain is Large ribosomal subunit protein uL6, found in Geotalea daltonii (strain DSM 22248 / JCM 15807 / FRC-32) (Geobacter daltonii).